Reading from the N-terminus, the 289-residue chain is Probable ABC transporter permease protein BRA0749/BS1330_II0742 (289 aa).

The next 6 membrane-spanning stretches (helical) occupy residues 9–29 (FLIL…VVHL), 70–90 (VWTV…AIIL), 99–119 (VARV…AIVW), 144–166 (IQWL…LVTV), 213–233 (IAIV…WVMT), and 260–280 (EASA…VIYI). An ABC transmembrane type-1 domain is found at 65–279 (LWRTAVWTVA…AILLVFTVIY (215 aa)).

It belongs to the binding-protein-dependent transport system permease family. In terms of assembly, the complex is composed of two ATP-binding proteins (BRA0745), two transmembrane proteins (BRA0749) and a solute-binding protein (BRA0748).

It localises to the cell inner membrane. Its function is as follows. Probably part of an ABC transporter complex. Probably responsible for the translocation of the substrate across the membrane. This chain is Probable ABC transporter permease protein BRA0749/BS1330_II0742, found in Brucella suis biovar 1 (strain 1330).